The sequence spans 573 residues: Proline--tRNA ligase (573 aa).

It belongs to the class-II aminoacyl-tRNA synthetase family. ProS type 1 subfamily. Homodimer.

The protein localises to the cytoplasm. The catalysed reaction is tRNA(Pro) + L-proline + ATP = L-prolyl-tRNA(Pro) + AMP + diphosphate. Catalyzes the attachment of proline to tRNA(Pro) in a two-step reaction: proline is first activated by ATP to form Pro-AMP and then transferred to the acceptor end of tRNA(Pro). As ProRS can inadvertently accommodate and process non-cognate amino acids such as alanine and cysteine, to avoid such errors it has two additional distinct editing activities against alanine. One activity is designated as 'pretransfer' editing and involves the tRNA(Pro)-independent hydrolysis of activated Ala-AMP. The other activity is designated 'posttransfer' editing and involves deacylation of mischarged Ala-tRNA(Pro). The misacylated Cys-tRNA(Pro) is not edited by ProRS. The protein is Proline--tRNA ligase of Geobacter sp. (strain M21).